Consider the following 125-residue polypeptide: Large ribosomal subunit protein bL12 (125 aa).

As to quaternary structure, homodimer. Part of the ribosomal stalk of the 50S ribosomal subunit. Forms a multimeric L10(L12)X complex, where L10 forms an elongated spine to which 2 to 4 L12 dimers bind in a sequential fashion. Binds GTP-bound translation factors. Post-translationally, two isoforms seem to exist. One is probably dimethylated on Lys-69 and monomethylated on Lys-86 while the other is probably acetylated or trimethylated on both Lys-86 and Lys-89.

Its function is as follows. Forms part of the ribosomal stalk which helps the ribosome interact with GTP-bound translation factors. Is thus essential for accurate translation. This chain is Large ribosomal subunit protein bL12, found in Rhodopseudomonas palustris (strain ATCC BAA-98 / CGA009).